Consider the following 183-residue polypeptide: Ferritin heavy chain (183 aa).

Methionine 1 carries the N-acetylmethionine modification. Residue threonine 2 is modified to N-acetylthreonine; in Ferritin heavy chain, N-terminally processed. The Ferritin-like diiron domain occupies 11 to 160; sequence QNYHQDSEAA…DHVTNLRKMG (150 aa). The Fe cation site is built by glutamate 28, glutamate 63, histidine 66, glutamate 108, and glutamine 142. Serine 179 and serine 183 each carry phosphoserine.

The protein belongs to the ferritin family. In terms of assembly, oligomer of 24 subunits. There are two types of subunits: L (light) chain and H (heavy) chain. The major chain can be light or heavy, depending on the species and tissue type. In the human liver, the heavy chain is predominant. The functional molecule forms a roughly spherical shell with a diameter of 12 nm and contains a central cavity into which the insoluble mineral iron core is deposited. Interacts with NCOA4; NCOA4 promotes targeting of the iron-binding ferritin complex to autolysosomes following starvation or iron depletion. In terms of tissue distribution, expressed in the liver.

The protein localises to the cytoplasm. It is found in the lysosome. It localises to the cytoplasmic vesicle. The protein resides in the autophagosome. The catalysed reaction is 4 Fe(2+) + O2 + 4 H(+) = 4 Fe(3+) + 2 H2O. Its function is as follows. Stores iron in a soluble, non-toxic, readily available form. Important for iron homeostasis. Has ferroxidase activity. Iron is taken up in the ferrous form and deposited as ferric hydroxides after oxidation. Also plays a role in delivery of iron to cells. Mediates iron uptake in capsule cells of the developing kidney. Delivery to lysosomes is mediated by the cargo receptor NCOA4 for autophagic degradation and release of iron. This is Ferritin heavy chain (FTH1) from Homo sapiens (Human).